Consider the following 254-residue polypeptide: Flagellar L-ring protein 1 (254 aa).

A signal peptide spans Met-1–Ala-26.

It belongs to the FlgH family. The basal body constitutes a major portion of the flagellar organelle and consists of four rings (L,P,S, and M) mounted on a central rod.

It localises to the cell outer membrane. The protein resides in the bacterial flagellum basal body. Assembles around the rod to form the L-ring and probably protects the motor/basal body from shearing forces during rotation. The sequence is that of Flagellar L-ring protein 1 (flgH1) from Bradyrhizobium diazoefficiens (strain JCM 10833 / BCRC 13528 / IAM 13628 / NBRC 14792 / USDA 110).